The sequence spans 125 residues: U11-myrmicitoxin-Ta1a (125 aa).

An N-terminal signal peptide occupies residues 1 to 21 (MKTVIFILGFAFVAILIPTNG). Residues 22–91 (ESMADADAMA…RAMAAAYAAA (70 aa)) constitute a propeptide that is removed on maturation. Cysteines 101 and 124 form a disulfide.

This sequence belongs to the formicidae venom precursor-01 superfamily. In terms of tissue distribution, expressed by the venom gland.

It localises to the secreted. It is found in the target cell membrane. In terms of biological role, neurotoxin that causes irreversible rapid flaccid paralysis in blowflies and honeybees upon intrathoracic injection. Causes a quick and irreversible cytolytic effect (at 10 uM) indicating it possibly acts as a pore-forming peptide. Shows only weak effect on aphids (A.pisum) at high doses 24 hours post intrathoracic injection. In vitro, is not cytotoxic on the dipteran S2 Drosophila embryonic cell line. This is U11-myrmicitoxin-Ta1a from Tetramorium africanum (Fierce ant).